We begin with the raw amino-acid sequence, 213 residues long: MATKLTERQQEILDLIRQTVARTGFPPTRAEIAQALGFRSPNAAEDHLKALARKGAIELTAGASRGIRLKDAEPTPSPILASLSQLLLPLVGRVAAGSPILAAEHVEREVGVDPSLFSQAPDYLLKVRGMSMRDAGILEGDLLAVKKSSEARNGQIIVARLGDDVTVKRLQRHGSRIELLPENPEFSPILVAPDDEFALEGVAVGLIRTHALH.

A DNA-binding region (H-T-H motif) is located at residues 29–49 (RAEIAQALGFRSPNAAEDHLK). Active-site for autocatalytic cleavage activity residues include S131 and K168.

This sequence belongs to the peptidase S24 family. Homodimer.

The enzyme catalyses Hydrolysis of Ala-|-Gly bond in repressor LexA.. Functionally, represses a number of genes involved in the response to DNA damage (SOS response), including recA and lexA. In the presence of single-stranded DNA, RecA interacts with LexA causing an autocatalytic cleavage which disrupts the DNA-binding part of LexA, leading to derepression of the SOS regulon and eventually DNA repair. In Bordetella avium (strain 197N), this protein is LexA repressor.